Consider the following 340-residue polypeptide: GTP 3',8-cyclase (340 aa).

A Radical SAM core domain is found at K8 to D227. GTP is bound at residue R17. C24 and C28 together coordinate [4Fe-4S] cluster. Y30 contacts S-adenosyl-L-methionine. C31 contacts [4Fe-4S] cluster. R71 is a GTP binding site. G75 contacts S-adenosyl-L-methionine. Residue T102 participates in GTP binding. S126 serves as a coordination point for S-adenosyl-L-methionine. Residue K163 coordinates GTP. S-adenosyl-L-methionine is bound at residue M197. [4Fe-4S] cluster is bound by residues C261 and C264. R266 to R268 contributes to the GTP binding site. C278 serves as a coordination point for [4Fe-4S] cluster.

It belongs to the radical SAM superfamily. MoaA family. As to quaternary structure, monomer and homodimer. It depends on [4Fe-4S] cluster as a cofactor.

It carries out the reaction GTP + AH2 + S-adenosyl-L-methionine = (8S)-3',8-cyclo-7,8-dihydroguanosine 5'-triphosphate + 5'-deoxyadenosine + L-methionine + A + H(+). It functions in the pathway cofactor biosynthesis; molybdopterin biosynthesis. Its function is as follows. Catalyzes the cyclization of GTP to (8S)-3',8-cyclo-7,8-dihydroguanosine 5'-triphosphate. In Staphylococcus aureus (strain USA300), this protein is GTP 3',8-cyclase.